Consider the following 247-residue polypeptide: MGQKVNPNGFRYGITKAHNSVWYADKMQFASHLLEDQKIYDFFDKKVRQLQIGNVQIKRNQNGLILIYVYTAKPAVMLGTNGENIKNLTKDLQKILKNKKANISIQVIELKKPDLNARLLAEDIAIKLENRGSFRLAQKFAIKAALKAGAKGIKTSVSGRLNGVDMARTEGYNEGEMKLHTLRQDVDYAATTAKTTYGILGVKVWVSLGEILSDEQKAKQEEMDLLNAPKDRRVRRGGERHASTKKN.

The KH type-2 domain maps to 39 to 111 (IYDFFDKKVR…NISIQVIELK (73 aa)). Residues 221–247 (EEMDLLNAPKDRRVRRGGERHASTKKN) are disordered. Residues 236 to 247 (RGGERHASTKKN) show a composition bias toward basic and acidic residues.

This sequence belongs to the universal ribosomal protein uS3 family. In terms of assembly, part of the 30S ribosomal subunit. Forms a tight complex with proteins S10 and S14.

Its function is as follows. Binds the lower part of the 30S subunit head. Binds mRNA in the 70S ribosome, positioning it for translation. This is Small ribosomal subunit protein uS3 from Metamycoplasma arthritidis (strain 158L3-1) (Mycoplasma arthritidis).